Reading from the N-terminus, the 450-residue chain is LanC-like protein 2 (450 aa).

G2 is lipidated: N-myristoyl glycine. Residues 2 to 15 are interaction with inositol phospholipids; the sequence is GETMSKRLKLHLGG. The residue at position 198 (Y198) is a Phosphotyrosine.

It belongs to the LanC-like protein family. In terms of assembly, interacts with an array of inositol phospholipids such as phosphatidylinositol 3-phosphate (PI3P), phosphatidylinositol 4-phosphate (PI4P) and phosphatidylinositol 5-phosphate (PI5P). PIP-binding enhances membrane association. Post-translationally, myristoylated. Essential for membrane association. Expressed in brain and testis.

It localises to the nucleus. Its subcellular location is the cytoplasm. The protein resides in the cell membrane. In terms of biological role, necessary for abscisic acid (ABA) binding on the cell membrane and activation of the ABA signaling pathway in granulocytes. This chain is LanC-like protein 2 (LANCL2), found in Homo sapiens (Human).